We begin with the raw amino-acid sequence, 367 residues long: Queuine tRNA-ribosyltransferase (367 aa).

The active-site Proton acceptor is the D92. Substrate is bound by residues 92–96 (DSGGF), D146, Q188, and G215. An RNA binding region spans residues 246 to 252 (GVGTPKD). The active-site Nucleophile is D265. C303, C305, C308, and H334 together coordinate Zn(2+).

This sequence belongs to the queuine tRNA-ribosyltransferase family. As to quaternary structure, homodimer. Within each dimer, one monomer is responsible for RNA recognition and catalysis, while the other monomer binds to the replacement base PreQ1. Zn(2+) serves as cofactor.

It catalyses the reaction 7-aminomethyl-7-carbaguanine + guanosine(34) in tRNA = 7-aminomethyl-7-carbaguanosine(34) in tRNA + guanine. The protein operates within tRNA modification; tRNA-queuosine biosynthesis. Functionally, catalyzes the base-exchange of a guanine (G) residue with the queuine precursor 7-aminomethyl-7-deazaguanine (PreQ1) at position 34 (anticodon wobble position) in tRNAs with GU(N) anticodons (tRNA-Asp, -Asn, -His and -Tyr). Catalysis occurs through a double-displacement mechanism. The nucleophile active site attacks the C1' of nucleotide 34 to detach the guanine base from the RNA, forming a covalent enzyme-RNA intermediate. The proton acceptor active site deprotonates the incoming PreQ1, allowing a nucleophilic attack on the C1' of the ribose to form the product. After dissociation, two additional enzymatic reactions on the tRNA convert PreQ1 to queuine (Q), resulting in the hypermodified nucleoside queuosine (7-(((4,5-cis-dihydroxy-2-cyclopenten-1-yl)amino)methyl)-7-deazaguanosine). The polypeptide is Queuine tRNA-ribosyltransferase (Francisella tularensis subsp. mediasiatica (strain FSC147)).